Reading from the N-terminus, the 60-residue chain is Large ribosomal subunit protein bL32 (60 aa).

Residues 1 to 23 (MAVPRNRHSNARKNIRRSHHAKQ) form a disordered region.

Belongs to the bacterial ribosomal protein bL32 family.

This Chlamydia abortus (strain DSM 27085 / S26/3) (Chlamydophila abortus) protein is Large ribosomal subunit protein bL32.